A 371-amino-acid polypeptide reads, in one-letter code: MAEPVNNLIDLLLNDNIKGLKPYESARRLFSGAGNKQQVWLNANESPFANDFTIDAERFNRYPDCQPPAVIDAYAAYAGVQPEQLLVSRGADEGIELLIRAFCTPGKDSVLICPPTYGMYAISAETCDVGIERAGLNDDFSLNVDAIKAFKGKVNLVFICSPNNPTGTSVDKNQLLEVVEHFADSAIVVIDEAYIEFDKDNSWAAELTHYPNIAILRTLSKAFALAGLRCGFTLAQAPVIQALMKVIAPYPIPEPVAQIAAQALSSEGLVTLEQQVAVINQEKALLKSALAEIADVELVGDDKANFILFRTPQKSALMSHLVASGILIRDQSKQINLDNCLRITVGSPEQNKQLLSEISRFFTLQTSTQEA.

An N6-(pyridoxal phosphate)lysine modification is found at K221.

Belongs to the class-II pyridoxal-phosphate-dependent aminotransferase family. Histidinol-phosphate aminotransferase subfamily. Homodimer. The cofactor is pyridoxal 5'-phosphate.

It carries out the reaction L-histidinol phosphate + 2-oxoglutarate = 3-(imidazol-4-yl)-2-oxopropyl phosphate + L-glutamate. Its pathway is amino-acid biosynthesis; L-histidine biosynthesis; L-histidine from 5-phospho-alpha-D-ribose 1-diphosphate: step 7/9. The chain is Histidinol-phosphate aminotransferase from Pseudoalteromonas atlantica (strain T6c / ATCC BAA-1087).